Consider the following 361-residue polypeptide: Phosphoserine aminotransferase (361 aa).

Arg-43 lines the L-glutamate pocket. Pyridoxal 5'-phosphate is bound by residues 77–78, Trp-103, Thr-153, Asp-173, and Gln-196; that span reads AS. An N6-(pyridoxal phosphate)lysine modification is found at Lys-197. Position 238-239 (238-239) interacts with pyridoxal 5'-phosphate; that stretch reads NT.

It belongs to the class-V pyridoxal-phosphate-dependent aminotransferase family. SerC subfamily. In terms of assembly, homodimer. It depends on pyridoxal 5'-phosphate as a cofactor.

It localises to the cytoplasm. The enzyme catalyses O-phospho-L-serine + 2-oxoglutarate = 3-phosphooxypyruvate + L-glutamate. It carries out the reaction 4-(phosphooxy)-L-threonine + 2-oxoglutarate = (R)-3-hydroxy-2-oxo-4-phosphooxybutanoate + L-glutamate. It functions in the pathway amino-acid biosynthesis; L-serine biosynthesis; L-serine from 3-phospho-D-glycerate: step 2/3. Its pathway is cofactor biosynthesis; pyridoxine 5'-phosphate biosynthesis; pyridoxine 5'-phosphate from D-erythrose 4-phosphate: step 3/5. In terms of biological role, catalyzes the reversible conversion of 3-phosphohydroxypyruvate to phosphoserine and of 3-hydroxy-2-oxo-4-phosphonooxybutanoate to phosphohydroxythreonine. The chain is Phosphoserine aminotransferase from Pseudomonas fluorescens (strain SBW25).